Consider the following 555-residue polypeptide: Urocanate hydratase (555 aa).

Residues 52 to 53 (GG), Gln-130, 176 to 178 (GMG), Glu-196, Arg-201, 242 to 243 (NA), 263 to 267 (QTSAH), 273 to 274 (YL), and Tyr-322 contribute to the NAD(+) site. Residue Cys-410 is part of the active site. Gly-492 serves as a coordination point for NAD(+).

The protein belongs to the urocanase family. Requires NAD(+) as cofactor.

Its subcellular location is the cytoplasm. The enzyme catalyses 4-imidazolone-5-propanoate = trans-urocanate + H2O. It functions in the pathway amino-acid degradation; L-histidine degradation into L-glutamate; N-formimidoyl-L-glutamate from L-histidine: step 2/3. Functionally, catalyzes the conversion of urocanate to 4-imidazolone-5-propionate. This Shewanella baltica (strain OS185) protein is Urocanate hydratase.